Here is a 639-residue protein sequence, read N- to C-terminus: MSKVIGIDLGTTNSCVAIMEGGEPIVIANSEGSRTTPSMVAFTEAGERIVGQQAKRQAVTNPENTLFAIKRLIGRKFETEAVKKDIAISPFKIVKADNGDAWVDVRDKKYSPPEISAIILQKMKKTAEDYLGETVTDAVITVPAYFDDSQRQATKDAGKIAGLNVLRIINEPTAAALAYGLDKKKDEKIAVFDLGGGTFDVSVLELGDGVFEVKSTNGDTFLGGEDFDQKIIDWIADEFKKDQGIDLRGDKMALQRLKEAAEKAKCELSGSMETDINLPFITADASGPKHLNLKLSRAKLESLCDDLLRKLEGPCRTAMKDAGLTASEIDEVILVGGMTRMPAVVQRVQEIFGKVPNKGVNPDEVVAIGAGIQGGVLKGDVKDVLLLDVTPLSLGIETLGGVLTRLIEKNTTIPCRKSQTFSTAADNQPAVSIHVLQGEREMARDNKTLGNFELTGIPPAPRGVPQIEVTFDIDANGIVHVSAKDLGTGKEQSIRITASSGLSKEEIDKMVKDAESHAAEDKKKREAIEARNQADSMIYSTEKSLKEVGDKVDAVEKGTIENKIADLKKVMDSDDAEVIKKATDELAQAAHKLAEAMYAQAQQAPGADSCGGDCGQQQEAGAKPKDEKVVDADFEEVKK.

A Phosphothreonine; by autocatalysis modification is found at T198. Positions 601-639 (AQQAPGADSCGGDCGQQQEAGAKPKDEKVVDADFEEVKK) are disordered. Basic and acidic residues predominate over residues 622–639 (AKPKDEKVVDADFEEVKK).

The protein belongs to the heat shock protein 70 family.

In terms of biological role, acts as a chaperone. The protein is Chaperone protein DnaK of Trichlorobacter lovleyi (strain ATCC BAA-1151 / DSM 17278 / SZ) (Geobacter lovleyi).